A 136-amino-acid polypeptide reads, in one-letter code: DNA-directed RNA polymerase subunit omega (136 aa).

This sequence belongs to the RNA polymerase subunit omega family. The RNAP catalytic core consists of 2 alpha, 1 beta, 1 beta' and 1 omega subunit. When a sigma factor is associated with the core the holoenzyme is formed, which can initiate transcription.

The catalysed reaction is RNA(n) + a ribonucleoside 5'-triphosphate = RNA(n+1) + diphosphate. In terms of biological role, promotes RNA polymerase assembly. Latches the N- and C-terminal regions of the beta' subunit thereby facilitating its interaction with the beta and alpha subunits. The polypeptide is DNA-directed RNA polymerase subunit omega (Methylorubrum extorquens (strain CM4 / NCIMB 13688) (Methylobacterium extorquens)).